Here is a 140-residue protein sequence, read N- to C-terminus: Granulocyte-macrophage colony-stimulating factor (140 aa).

Residues 1–17 (MWLQNLLLLGTVVCSIC) form the signal peptide. Serine 24 carries an O-linked (GalNAc...) serine glycan. O-linked (GalNAc...) threonine glycosylation occurs at threonine 27. 3 N-linked (GlcNAc...) asparagine glycosylation sites follow: asparagine 45, asparagine 55, and asparagine 87. Intrachain disulfides connect cysteine 72–cysteine 114 and cysteine 106–cysteine 139.

It belongs to the GM-CSF family. Monomer. The signaling GM-CSF receptor complex is a dodecamer of two head-to-head hexamers of two alpha, two beta, and two ligand subunits.

Its subcellular location is the secreted. Its function is as follows. Cytokine that stimulates the growth and differentiation of hematopoietic precursor cells from various lineages, including granulocytes, macrophages, eosinophils and erythrocytes. In Cavia porcellus (Guinea pig), this protein is Granulocyte-macrophage colony-stimulating factor (CSF2).